A 249-amino-acid chain; its full sequence is Flavodoxin/ferredoxin--NADP reductase (249 aa).

Positions 2–102 (NTWITAKIIK…KKSYGFFTLN (101 aa)) constitute an FAD-binding FR-type domain. FAD contacts are provided by residues 51–54 (RAYS), Y67, 75–77 (QLT), and T117. Residues 144–145 (VR), 174–175 (SR), R185, and 215–217 (NPD) contribute to the NADP(+) site. 248 to 249 (YW) lines the FAD pocket.

It belongs to the ferredoxin--NADP reductase type 1 family. Requires FAD as cofactor.

It localises to the cytoplasm. It carries out the reaction 2 reduced [2Fe-2S]-[ferredoxin] + NADP(+) + H(+) = 2 oxidized [2Fe-2S]-[ferredoxin] + NADPH. The catalysed reaction is reduced [flavodoxin] + NADP(+) = oxidized [flavodoxin] + NADPH + 2 H(+). Functionally, transports electrons between flavodoxin or ferredoxin and NADPH. The polypeptide is Flavodoxin/ferredoxin--NADP reductase (fpr) (Buchnera aphidicola subsp. Baizongia pistaciae (strain Bp)).